Consider the following 419-residue polypeptide: Imidazolonepropionase (419 aa).

2 residues coordinate Fe(3+): His87 and His89. Zn(2+) is bound by residues His87 and His89. Positions 96, 159, and 192 each coordinate 4-imidazolone-5-propanoate. Tyr159 lines the N-formimidoyl-L-glutamate pocket. Fe(3+) is bound at residue His257. Zn(2+) is bound at residue His257. Position 260 (Gln260) interacts with 4-imidazolone-5-propanoate. Residue Asp332 participates in Fe(3+) binding. Asp332 contributes to the Zn(2+) binding site. Positions 334 and 336 each coordinate N-formimidoyl-L-glutamate. Ser337 provides a ligand contact to 4-imidazolone-5-propanoate.

Belongs to the metallo-dependent hydrolases superfamily. HutI family. It depends on Zn(2+) as a cofactor. The cofactor is Fe(3+).

Its subcellular location is the cytoplasm. The enzyme catalyses 4-imidazolone-5-propanoate + H2O = N-formimidoyl-L-glutamate. The protein operates within amino-acid degradation; L-histidine degradation into L-glutamate; N-formimidoyl-L-glutamate from L-histidine: step 3/3. In terms of biological role, catalyzes the hydrolytic cleavage of the carbon-nitrogen bond in imidazolone-5-propanoate to yield N-formimidoyl-L-glutamate. It is the third step in the universal histidine degradation pathway. The protein is Imidazolonepropionase of Alteromonas mediterranea (strain DSM 17117 / CIP 110805 / LMG 28347 / Deep ecotype).